Here is a 246-residue protein sequence, read N- to C-terminus: Sulfate transporter CysZ (246 aa).

The next 4 membrane-spanning stretches (helical) occupy residues 24 to 44 (LFVL…IGFA), 69 to 89 (IVWP…FTMV), 148 to 168 (LLVL…WILF), and 214 to 234 (LLIP…ATLF).

This sequence belongs to the CysZ family.

Its subcellular location is the cell inner membrane. Functionally, high affinity, high specificity proton-dependent sulfate transporter, which mediates sulfate uptake. Provides the sulfur source for the cysteine synthesis pathway. In Pseudomonas paraeruginosa (strain DSM 24068 / PA7) (Pseudomonas aeruginosa (strain PA7)), this protein is Sulfate transporter CysZ.